Here is a 427-residue protein sequence, read N- to C-terminus: Adenylosuccinate synthetase (427 aa).

Residues 12–18 (GDEGKGK) and 40–42 (GHT) contribute to the GTP site. Aspartate 13 serves as the catalytic Proton acceptor. Mg(2+)-binding residues include aspartate 13 and glycine 40. IMP is bound by residues 13–16 (DEGK), 38–41 (NAGH), threonine 128, arginine 142, glutamine 223, threonine 238, and arginine 302. Histidine 41 (proton donor) is an active-site residue. Residue 298-304 (VTTGRDR) coordinates substrate. GTP contacts are provided by residues arginine 304, 330–332 (KLD), and 412–414 (GVG).

Belongs to the adenylosuccinate synthetase family. Homodimer. Mg(2+) serves as cofactor.

Its subcellular location is the cytoplasm. It carries out the reaction IMP + L-aspartate + GTP = N(6)-(1,2-dicarboxyethyl)-AMP + GDP + phosphate + 2 H(+). It participates in purine metabolism; AMP biosynthesis via de novo pathway; AMP from IMP: step 1/2. In terms of biological role, plays an important role in the de novo pathway of purine nucleotide biosynthesis. Catalyzes the first committed step in the biosynthesis of AMP from IMP. The protein is Adenylosuccinate synthetase of Streptomyces griseus subsp. griseus (strain JCM 4626 / CBS 651.72 / NBRC 13350 / KCC S-0626 / ISP 5235).